Reading from the N-terminus, the 637-residue chain is Chaperone protein HtpG (637 aa).

The segment at 1–345 (MSQQETHGFQ…SNDLPLNVSR (345 aa)) is a; substrate-binding. The interval 346–562 (EILQDNHITK…EGEMSSQMIK (217 aa)) is b. The tract at residues 563 to 637 (LMQAAGQPVP…MNQMLLANLK (75 aa)) is c.

The protein belongs to the heat shock protein 90 family. In terms of assembly, homodimer.

Its subcellular location is the cytoplasm. Molecular chaperone. Has ATPase activity. This chain is Chaperone protein HtpG, found in Shewanella sp. (strain MR-4).